Consider the following 397-residue polypeptide: Odorant receptor 22a (397 aa).

Residues 1-49 (MLSKFFPHIKEKPLSERVKSRDAFIYLDRVMWSFGWTEPENKRWILPYK) are Cytoplasmic-facing. The chain crosses the membrane as a helical span at residues 50–70 (LWLAFVNIVMLILLPISISIE). Topologically, residues 71–86 (YLHRFKTFSAGEFLSS) are extracellular. The helical transmembrane segment at 87–107 (LEIGVNMYGSSFKCAFTLIGF) threads the bilayer. Residues 108-136 (KKRQEAKVLLDQLDKRCLSDKERSTVHRY) lie on the Cytoplasmic side of the membrane. Residues 137-157 (VAMGNFFDILYHIFYSTFVVM) form a helical membrane-spanning segment. The Extracellular segment spans residues 158-182 (NFPYFLLERRHAWRMYFPYIDSDEQ). A helical membrane pass occupies residues 183–203 (FYISSIAECFLMTEAIYMDLC). Topologically, residues 204–263 (TDVCPLISMLMARCHISLLKQRLRNLRSKPGRTEDEYLEELTECIRDHRLLLDYVDALRP) are cytoplasmic. Residues 264–280 (VFSGTIFVQFLLIGTVL) form a helical membrane-spanning segment. Residues 281–286 (GLSMIN) are Extracellular-facing. Residues 287-304 (LMFFSTFWTGVATCLFMF) form a helical membrane-spanning segment. The Cytoplasmic portion of the chain corresponds to 305 to 356 (DVSMETFPFCYLCNMIIDDCQEMSNCLFQSDWTSADRRYKSTLVYFLHNLQQ). Residues 357 to 377 (PITLTAGGVFPISMQTNLAMV) traverse the membrane as a helical segment. Over 378-397 (KLAFSVVTVIKQFNLAERFQ) the chain is Extracellular.

The protein belongs to the insect chemoreceptor superfamily. Heteromeric odorant receptor channel (TC 1.A.69) family. Or2a subfamily. As to quaternary structure, interacts with Orco, via conserved C-terminal cytoplasmic loops. Complexes exist early in the endomembrane system in olfactory sensory neurons (OSNs), coupling these complexes to the conserved ciliary trafficking pathway. Interacts with snmp1. As to expression, expressed with Orco in 17-20 sensory neurons on the medial-proximal edge of the antenna. Expressed in the ab3A neuron which responds to ethyl butyrate.

The protein resides in the cell membrane. Functionally, odorant receptor which mediates acceptance or avoidance behavior, depending on its substrates. The odorant receptor repertoire encodes a large collection of odor stimuli that vary widely in identity, intensity, and duration. Involved in the behavioral responses ethyl butyrate and to esters in more general. Complexes with Orco to form odorant-sensing units, providing sensitive and prolonged odorant signaling and calcium permeability. They are necessary and sufficient to promote functional reconstitution of odor-evoked signaling in sensory neurons that normally respond only to carbon dioxide. In Drosophila melanogaster (Fruit fly), this protein is Odorant receptor 22a (Or22a).